The chain runs to 248 residues: 3-deoxy-manno-octulosonate cytidylyltransferase (248 aa).

This sequence belongs to the KdsB family.

The protein resides in the cytoplasm. It catalyses the reaction 3-deoxy-alpha-D-manno-oct-2-ulosonate + CTP = CMP-3-deoxy-beta-D-manno-octulosonate + diphosphate. The protein operates within nucleotide-sugar biosynthesis; CMP-3-deoxy-D-manno-octulosonate biosynthesis; CMP-3-deoxy-D-manno-octulosonate from 3-deoxy-D-manno-octulosonate and CTP: step 1/1. Its pathway is bacterial outer membrane biogenesis; lipopolysaccharide biosynthesis. Functionally, activates KDO (a required 8-carbon sugar) for incorporation into bacterial lipopolysaccharide in Gram-negative bacteria. The protein is 3-deoxy-manno-octulosonate cytidylyltransferase of Salmonella agona (strain SL483).